Reading from the N-terminus, the 275-residue chain is Myb/SANT-like DNA-binding domain-containing protein 3 (275 aa).

In terms of domain architecture, Myb-like spans 13–78 (FSELEKSILL…QLKKCWENIK (66 aa)). Residues Ser96 and Ser98 each carry the phosphoserine modification. Residue Lys154 forms a Glycyl lysine isopeptide (Lys-Gly) (interchain with G-Cter in SUMO2) linkage. Residues 211–247 (QLIQMNEVHVAKIQQIERECEMAEEEHRIKMEVLNKK) adopt a coiled-coil conformation. Residue Ser274 is modified to Phosphoserine.

Belongs to the MSANTD3 family. In terms of tissue distribution, expressed in brain.

This is Myb/SANT-like DNA-binding domain-containing protein 3 (MSANTD3) from Homo sapiens (Human).